Reading from the N-terminus, the 793-residue chain is MPQVEHQNSTVLTDDELRTLDAHWRAANYLAAGQIYLLANALLTEPLSPAHIKPRLLGHWGTSPGLNLVHTHLNRVIKARDLDALCVWGPGHGGPAVLANSWLEGSYSETYPDISRDAAGMGKLFRQFSFPGGVPSHVAPETPGSIHEGGELGYSLAHAYGAAFDNPDLLVACVIGDGEAETGPLAASWHSNKFLDPVHDGAVLPILHLNGYKIANPTVLSRIPEPELDELLRGYGHEPLHVTGDDPHQVHRALAEAFDRALDRVALMQRTAREEGATERIRWPMIVLRTPKGWTGPAEVDGRPVEGTWRAHQVPLPEVRENPEHLRQLEGWLRSYRPEELFDADGRPTADVLACVPHGARRLGATPHANGGLLLRPLPIPPLDRFAVAVDKPGATLHEPTRVLGDLLEQVMKDTSARRDFRLVGPDETASNRLDAVFDASGKAWQAQTLPVDEHLDRHGRVMEILSEHTCQGWLEGYLLTGRHGLFSCYEAFVHIVDSMVNQHIKWLKTSRELAWRAPIASLNYLLTSHVWRQDHNGFSHQDPGFVDHVLNKSPEAVRVYLPPDANTLLSVADHVLRSRDYVNVVVAGKQPCFDWLSMEQARAHCARGAGIWEWAGTQNDGEPDVVLACAGDVPTQEVLAASALLRRHLPALAVRVVNVVDMTRLLPREAHPHGMSDFEYDGLFTTDKPVIFAYHGYPWLIHRLAYSRTGHGNLHVRGYKEMGTTTTPFDMVVRNDLDRYRLVMDVVDRVPGLGVRAAAVRQTMADARTRHHAWIREHGTDLPEVANWTWEA.

Belongs to the XFP family. It depends on thiamine diphosphate as a cofactor.

The polypeptide is Probable phosphoketolase (Streptomyces avermitilis (strain ATCC 31267 / DSM 46492 / JCM 5070 / NBRC 14893 / NCIMB 12804 / NRRL 8165 / MA-4680)).